We begin with the raw amino-acid sequence, 724 residues long: Ribosomal RNA large subunit methyltransferase K/L (724 aa).

A THUMP domain is found at 42-153; it reads DAQRLVLWSR…KGRATLSVDL (112 aa).

This sequence belongs to the methyltransferase superfamily. RlmKL family.

The protein resides in the cytoplasm. It carries out the reaction guanosine(2445) in 23S rRNA + S-adenosyl-L-methionine = N(2)-methylguanosine(2445) in 23S rRNA + S-adenosyl-L-homocysteine + H(+). It catalyses the reaction guanosine(2069) in 23S rRNA + S-adenosyl-L-methionine = N(2)-methylguanosine(2069) in 23S rRNA + S-adenosyl-L-homocysteine + H(+). Functionally, specifically methylates the guanine in position 2445 (m2G2445) and the guanine in position 2069 (m7G2069) of 23S rRNA. The polypeptide is Ribosomal RNA large subunit methyltransferase K/L (Xylella fastidiosa (strain M12)).